A 325-amino-acid polypeptide reads, in one-letter code: 4-diphosphocytidyl-2-C-methyl-D-erythritol kinase (325 aa).

Lys-22 is an active-site residue. Pro-110–Ala-120 contributes to the ATP binding site. The active site involves Asp-152. Residues Pro-306–Ser-325 are disordered.

The protein belongs to the GHMP kinase family. IspE subfamily.

The catalysed reaction is 4-CDP-2-C-methyl-D-erythritol + ATP = 4-CDP-2-C-methyl-D-erythritol 2-phosphate + ADP + H(+). Its pathway is isoprenoid biosynthesis; isopentenyl diphosphate biosynthesis via DXP pathway; isopentenyl diphosphate from 1-deoxy-D-xylulose 5-phosphate: step 3/6. Catalyzes the phosphorylation of the position 2 hydroxy group of 4-diphosphocytidyl-2C-methyl-D-erythritol. This is 4-diphosphocytidyl-2-C-methyl-D-erythritol kinase from Kineococcus radiotolerans (strain ATCC BAA-149 / DSM 14245 / SRS30216).